The primary structure comprises 208 residues: 3-demethoxyubiquinol 3-hydroxylase (208 aa).

E57, E87, H90, E139, E171, and H174 together coordinate Fe cation.

This sequence belongs to the COQ7 family. Requires Fe cation as cofactor.

The protein localises to the cell membrane. It carries out the reaction a 5-methoxy-2-methyl-3-(all-trans-polyprenyl)benzene-1,4-diol + AH2 + O2 = a 3-demethylubiquinol + A + H2O. The protein operates within cofactor biosynthesis; ubiquinone biosynthesis. Functionally, catalyzes the hydroxylation of 2-nonaprenyl-3-methyl-6-methoxy-1,4-benzoquinol during ubiquinone biosynthesis. This is 3-demethoxyubiquinol 3-hydroxylase from Burkholderia cenocepacia (strain ATCC BAA-245 / DSM 16553 / LMG 16656 / NCTC 13227 / J2315 / CF5610) (Burkholderia cepacia (strain J2315)).